The chain runs to 420 residues: uncharacterized protein (420 aa).

Residues 1–25 form the signal peptide; the sequence is MRYAMNKIPALLLVGALIIATVASG. Cysteine 26 carries the post-translational modification N-acetylcysteine. Cysteine 26 is lipidated: S-archaeol cysteine.

This sequence belongs to the bacterial solute-binding protein 1 family.

The protein resides in the cell membrane. In terms of biological role, probably part of a binding-protein-dependent transport system PH1036/38/39. This is an uncharacterized protein from Pyrococcus horikoshii (strain ATCC 700860 / DSM 12428 / JCM 9974 / NBRC 100139 / OT-3).